The primary structure comprises 1469 residues: ABC transporter G family member 36 (1469 aa).

An N-acetylmethionine modification is found at methionine 1. Phosphoserine is present on residues serine 37, serine 38, and serine 40. Threonine 43 carries the post-translational modification Phosphothreonine. Position 45 is a phosphoserine (serine 45). Residues 171-444 (LGMIGIQFAK…FESFGFKCPE (274 aa)) enclose the ABC transporter 1 domain. 204–211 (GPPSSGKT) is a binding site for ATP. Residues 522 to 735 (ELLKSCWDKE…AFNGLVVNEM (214 aa)) enclose the ABC transmembrane type-2 1 domain. 7 helical membrane-spanning segments follow: residues 540–560 (FFYVFKTVQIVIIAAITSTLF), 575–595 (LYIGALLFGMIINMFNGFAEM), 621–641 (LPTFLLGIPSSILESTAWMVV), 659–679 (FLLVFLIQQMAASLFRLIASV), 685–705 (IANTGGALTLLLVFLLGGFLL), 713–733 (WWGWAYWVSPLTYAFNGLVVN), and 772–792 (ISVGALLCFTALFNILFTLAL). The disordered stretch occupies residues 806–852 (PEEENEDADQGKDPMRRSLSTADGNRRGEVAMGRMSRDSAAEASGGA). 3 positions are modified to phosphoserine: serine 825, serine 841, and serine 844. A compositionally biased stretch (basic and acidic residues) spans 829–845 (GNRRGEVAMGRMSRDSA). The 253-residue stretch at 867 to 1119 (MSFDDVKYFV…KVVEYFESFP (253 aa)) folds into the ABC transporter 2 domain. An ATP-binding site is contributed by 912–919 (GVSGAGKT). One can recognise an ABC transmembrane type-2 2 domain in the interval 1192-1406 (GQFKSCLWKQ…TVYGLIVSQY (215 aa)). 7 helical membrane-spanning segments follow: residues 1216 to 1236 (FIFTLATSLLIGTVFWQIGGN), 1239 to 1259 (NAGDLTMVIGALYAAIIFVGI), 1299 to 1319 (LPYVLIQTVYYSLIVYAMVGF), 1326 to 1346 (FFWFVFVSYFSFLYWTYYGMM), 1356 to 1376 (VASIFASAFYGIFNLFSGFFI), 1384 to 1404 (WWIWYYWICPVAWTVYGLIVS), and 1441 to 1461 (PVAAVLIAFTVFFAFIFAFCI).

It belongs to the ABC transporter superfamily. ABCG family. PDR (TC 3.A.1.205) subfamily. Interacts, in a Ca(2+)-dependent manner, with calmodulins CaM3, CaM7 and several CaM-like proteins (CML8, CML9, CML12/CAL4, CML37 and CML38), as well as with calcium regulated proteins CBL4/SOS3 and KIC. Post-translationally, phosphorylated upon perception of pathogen-associated molecular patterns (PAMPs); phosphorylations at Ser-40 and Ser-45, which likely regulate transport activity, are required for plant defense against pathogens (e.g. Blumeria graminis), but dispensable for recruitment to the host-pathogen interface and penetration sites. Phosphorylation at Ser-841 seems to be required for protein stability. As to expression, ubiquitous (at protein level). Higher levels in root hairs, stomata, epidermal cells, and hydathodes. Concentrated at the infection site of infected plants, including papillae and haustoria. Accumulates at the periphery of lateral root cap and root epidermal cells, especially in the outer lateral membrane domain facing the environment.

The protein resides in the cell membrane. It localises to the golgi apparatus. The protein localises to the trans-Golgi network membrane. Its subcellular location is the endoplasmic reticulum membrane. In terms of biological role, together with ABCG37, regulates auxin homeostasis and responses by playing a dual role in coumarin (e.g. esculin) and in the auxin precursor indole 3-butyric acid (IBA) efflux transport, thus influencing cotyledons, roots and root hairs development. Mediates the transport (export into the apoplast) of distinct indole-type metabolites in distinct biological processes; a precursor of 4-O-beta-D-glucosyl-indol-3-yl formamide (4OGlcI3F), a pathogen-inducible tryptophan-derived compound (e.g. upon Blumeria graminis conidiospore inoculation), being a probable substrate in extracellular pathogen defense. Involved in the cellular detoxification of xenobiotics by promoting the excretion of some auxinic herbicides including 4-(2,4-dichlorophenoxy)butyric acid (2,4-DB) and other members of the phenoxyalkanoic acid family but not 2,4-dichlorophenoxyacetic acid (2,4-D). Mediates thymidine exudation in the rhizosphere. May be a transporter of lignin precursors during tracheary element differentiation. Key factor that controls the extent of cell death in the defense response. Necessary for both callose deposition and glucosinolate activation in response to pathogens. As a central component of nonhost resistance (NHR), required for limiting invasion by nonadapted pathogens including powdery mildews (e.g. Blumeria graminis and Erysiphe pisi), root-penetrating pathogenic fungi (e.g. Fusarium oxysporum), Phakopsora pachyrhizi and Colletotrichum gloeosporioides (anthracnose fungi), probably by sensing Ca(2+) via interactions with calmodulins (e.g. CaM7). Confers resistance to cadmium (Cd) and lead (Pb), probably as an efflux pump of Cd2+ or Cd conjugates, and possibly, of chemicals that mediate pathogen resistance. Promotes resistance to abiotic stresses (e.g. drought and salt stress) and favors general growth by preventing sodium accumulation in plants. Required for microbe-associated molecular patterns (MAMPs)- and salicylic acid (SA)-dependent hypersensitive cell death (HR), involving indole glucosinolate breakdown products (e.g. indole-3-acetonitrile), probably in a PEN2 myrosinase-dependent metabolic pathway, triggered by the recognition of effectors from incompatible pathogens including oomycetes and bacteria (e.g. AvrRpm1 and AvrRps4) and benzothiadiazole- (BTH), and leading to an induced protection against pathogens (e.g. Pseudomonas syringae pv. tomato DC3000, Golovinomyces orontii and Hyaloperonospora arabidopsidis). This is ABC transporter G family member 36 from Arabidopsis thaliana (Mouse-ear cress).